A 664-amino-acid polypeptide reads, in one-letter code: Transketolase 1 (664 aa).

H26 provides a ligand contact to substrate. Residues H66 and 114–116 (GPL) each bind thiamine diphosphate. D155 is a binding site for Mg(2+). 2 residues coordinate thiamine diphosphate: G156 and N185. Mg(2+) is bound by residues N185 and I187. The substrate site is built by H260, R357, and S384. H260 is a thiamine diphosphate binding site. Catalysis depends on E411, which acts as the Proton donor. F437 serves as a coordination point for thiamine diphosphate. Substrate-binding residues include H461, D469, and R520.

It belongs to the transketolase family. In terms of assembly, homodimer. It depends on Mg(2+) as a cofactor. The cofactor is Ca(2+). Mn(2+) is required as a cofactor. Co(2+) serves as cofactor. Requires thiamine diphosphate as cofactor.

The catalysed reaction is D-sedoheptulose 7-phosphate + D-glyceraldehyde 3-phosphate = aldehydo-D-ribose 5-phosphate + D-xylulose 5-phosphate. Functionally, catalyzes the transfer of a two-carbon ketol group from a ketose donor to an aldose acceptor, via a covalent intermediate with the cofactor thiamine pyrophosphate. The protein is Transketolase 1 (tkt1) of Aliivibrio fischeri (strain ATCC 700601 / ES114) (Vibrio fischeri).